Consider the following 113-residue polypeptide: Prefoldin subunit beta (113 aa).

The protein belongs to the prefoldin subunit beta family. As to quaternary structure, heterohexamer of two alpha and four beta subunits.

The protein localises to the cytoplasm. In terms of biological role, molecular chaperone capable of stabilizing a range of proteins. Seems to fulfill an ATP-independent, HSP70-like function in archaeal de novo protein folding. The protein is Prefoldin subunit beta of Methanococcus maripaludis (strain C6 / ATCC BAA-1332).